The sequence spans 102 residues: MQKARIKLSSTKHEELDSVCNQIKAIAEKTGVDMAGPIPLPTKSLKITTRKSTDGEGSSSFDRWTMRVHKRVIDIEADERTMKHIMKVRIPDAVQIEIELRS.

Residues 37 to 61 form a disordered region; sequence PIPLPTKSLKITTRKSTDGEGSSSF.

Belongs to the universal ribosomal protein uS10 family. In terms of assembly, part of the 30S ribosomal subunit.

Involved in the binding of tRNA to the ribosomes. This is Small ribosomal subunit protein uS10 from Methanococcus vannielii (strain ATCC 35089 / DSM 1224 / JCM 13029 / OCM 148 / SB).